We begin with the raw amino-acid sequence, 196 residues long: HTH-type transcriptional regulator Hpr (196 aa).

An HTH marR-type domain is found at 13–157 (SIVFSHKMAL…LICIVRHIYG (145 aa)). Residues 63-86 (ISDIASHGVMHVSTAFNFSKKLEA) constitute a DNA-binding region (H-T-H motif).

As to quaternary structure, homodimer.

Negative regulator of protease production and sporulation. The polypeptide is HTH-type transcriptional regulator Hpr (Shouchella clausii (strain KSM-K16) (Alkalihalobacillus clausii)).